A 439-amino-acid polypeptide reads, in one-letter code: tRNA-2-methylthio-N(6)-dimethylallyladenosine synthase (439 aa).

The MTTase N-terminal domain occupies 2-119 (KYIYIKTWGC…LAQMIDKVEK (118 aa)). The [4Fe-4S] cluster site is built by C11, C48, C82, C156, C160, and C163. One can recognise a Radical SAM core domain in the interval 142–374 (KKTGYTASIS…QNCINKQTMS (233 aa)). Positions 377 to 439 (RKMLKSTQSV…HTHSLQGELI (63 aa)) constitute a TRAM domain.

The protein belongs to the methylthiotransferase family. MiaB subfamily. As to quaternary structure, monomer. It depends on [4Fe-4S] cluster as a cofactor.

It is found in the cytoplasm. It catalyses the reaction N(6)-dimethylallyladenosine(37) in tRNA + (sulfur carrier)-SH + AH2 + 2 S-adenosyl-L-methionine = 2-methylsulfanyl-N(6)-dimethylallyladenosine(37) in tRNA + (sulfur carrier)-H + 5'-deoxyadenosine + L-methionine + A + S-adenosyl-L-homocysteine + 2 H(+). Functionally, catalyzes the methylthiolation of N6-(dimethylallyl)adenosine (i(6)A), leading to the formation of 2-methylthio-N6-(dimethylallyl)adenosine (ms(2)i(6)A) at position 37 in tRNAs that read codons beginning with uridine. In Buchnera aphidicola subsp. Schizaphis graminum (strain Sg), this protein is tRNA-2-methylthio-N(6)-dimethylallyladenosine synthase.